Reading from the N-terminus, the 707-residue chain is Caprin-1 (707 aa).

2 stretches are compositionally biased toward low complexity: residues 1–15 and 22–43; these read MPSATSHSGSGSKSS and GSSGSEAAAGAAAPASQHPATG. Positions 1–48 are disordered; the sequence is MPSATSHSGSGSKSSGPPPPSGSSGSEAAAGAAAPASQHPATGTGAVQ. An N-acetylproline modification is found at Pro2. At Ser10 the chain carries Phosphoserine. Positions 58 to 92 form a coiled coil; that stretch reads VIDKKLRNLEKKKGKLDDYQERMNKGERLNQDQLD. Phosphoserine is present on Ser113. The stretch at 123–151 forms a coiled coil; the sequence is KTIKKTARREQLMREEAEQKRLKTVLELQ. An Omega-N-methylarginine modification is found at Arg163. Low complexity predominate over residues 325–335; sequence LQQQPQAASPS. Residues 325-347 are disordered; sequence LQQQPQAASPSVPEPHSLTPVAQ. 2 positions are modified to phosphoserine: Ser333 and Ser341. Residues 358–379 are G3BP1-binding; that stretch reads QDLMAQMQGPYNFIQDSMLDFE. Disordered stretches follow at residues 412-496, 526-558, and 570-707; these read ESRL…AGTS, PANEPETLKQQSQYQATYNQSFSSQPHQVEQTE, and TYHG…QQVN. A compositionally biased stretch (polar residues) spans 431 to 452; that stretch reads PLVSSTSEGYTASQPLYQPSHA. Basic and acidic residues predominate over residues 453 to 462; the sequence is TEQRPQKEPM. Over residues 465–474 the composition is skewed to polar residues; the sequence is IQATISLNTD. The span at 475-489 shows a compositional bias: low complexity; sequence QTTASSSLPAASQPQ. 2 stretches are compositionally biased toward polar residues: residues 533–552 and 572–603; these read LKQQSQYQATYNQSFSSQPH and HGSQDQPHQVPGNHQQPPQQNTGFPRSSQPYY. Tyr623 is modified (phosphotyrosine). 2 positions are modified to omega-N-methylarginine: Arg624 and Arg631. Phosphotyrosine occurs at positions 634 and 637. Arg638 bears the Omega-N-methylarginine mark. Residues 640–655 show a composition bias toward polar residues; that stretch reads SFSNTPNSGYSQSQFT. Ser642 and Ser647 each carry an O-linked (GlcNAc) serine glycan. Residues Tyr649, Tyr660, Tyr663, and Tyr668 each carry the phosphotyrosine modification. 2 stretches are compositionally biased toward low complexity: residues 674-684 and 695-707; these read RGSGQSGPRGA and NRGMPQMNTQQVN. Arg696 carries the asymmetric dimethylarginine; alternate modification. Arg696 carries the omega-N-methylarginine; alternate modification.

This sequence belongs to the caprin family. As to quaternary structure, may form homomultimers. Interacts with G3BP1; interaction is direct and promotes stress granule formation. Interacts with G3BP2; interaction is direct and promotes stress granule formation. Interacts with PQBP1. Interacts with DDX3X. Interacts (when phosphorylated by EPHA4) with FMR1; interaction with FMR1 promotes formation of a membraneless compartment. Tyrosine phosphorylation by EPHA4 promotes interaction with FMR1 and liquid-liquid phase separation (LLPS) for the formation of a membraneless compartment that concentrates mRNAs with associated regulatory factors. In terms of processing, O-glycosylated (O-GlcNAcylated), in a cell cycle-dependent manner. O-glycosylation by OGT inhibit ability to undergo liquid-liquid phase separation (LLPS). In terms of tissue distribution, highest expression in thymus, spleen and brain (at protein level). Lower levels in kidney, muscle and liver (at protein level).

The protein localises to the cytoplasm. The protein resides in the cytoplasmic ribonucleoprotein granule. It is found in the cytosol. Its subcellular location is the cell projection. It localises to the dendrite. The protein localises to the lamellipodium. With respect to regulation, ability to mediate liquid-liquid phase separation is regulated by ATP: moderate concentrations of ATP enhance phase separation, whereas high concentrations of ATP lead to inhibition of phase separation. Functionally, mRNA-binding protein that acts as a regulator of mRNAs transport, translation and/or stability, and which is involved in neurogenesis, synaptic plasticity in neurons and cell proliferation and migration in multiple cell types. Plays an essential role in cytoplasmic stress granule formation. Acts as an mRNA regulator by mediating formation of some phase-separated membraneless compartment: undergoes liquid-liquid phase separation upon binding to target mRNAs, leading to assemble mRNAs into cytoplasmic ribonucleoprotein granules that concentrate mRNAs with associated regulatory factors. Undergoes liquid-liquid phase separation following phosphorylation and interaction with FMR1, promoting formation of cytoplasmic ribonucleoprotein granules that concentrate mRNAs with factors that inhibit translation and mediate deadenylation of target mRNAs. In these cytoplasmic ribonucleoprotein granules, CAPRIN1 mediates recruitment of CNOT7 deadenylase, leading to mRNA deadenylation and degradation. Binds directly and selectively to MYC and CCND2 mRNAs. In neuronal cells, directly binds to several mRNAs associated with RNA granules, including BDNF, CAMK2A, CREB1, MAP2, NTRK2 mRNAs, as well as to GRIN1 and KPNB1 mRNAs, but not to rRNAs. This Mus musculus (Mouse) protein is Caprin-1 (Caprin1).